Here is a 342-residue protein sequence, read N- to C-terminus: 4-hydroxythreonine-4-phosphate dehydrogenase (342 aa).

2 residues coordinate substrate: histidine 140 and threonine 141. A divalent metal cation-binding residues include histidine 175, histidine 220, and histidine 275. Lysine 283, asparagine 292, and arginine 301 together coordinate substrate.

Belongs to the PdxA family. In terms of assembly, homodimer. It depends on Zn(2+) as a cofactor. Requires Mg(2+) as cofactor. The cofactor is Co(2+).

The protein localises to the cytoplasm. The enzyme catalyses 4-(phosphooxy)-L-threonine + NAD(+) = 3-amino-2-oxopropyl phosphate + CO2 + NADH. It functions in the pathway cofactor biosynthesis; pyridoxine 5'-phosphate biosynthesis; pyridoxine 5'-phosphate from D-erythrose 4-phosphate: step 4/5. Functionally, catalyzes the NAD(P)-dependent oxidation of 4-(phosphooxy)-L-threonine (HTP) into 2-amino-3-oxo-4-(phosphooxy)butyric acid which spontaneously decarboxylates to form 3-amino-2-oxopropyl phosphate (AHAP). In Rhizobium meliloti (strain 1021) (Ensifer meliloti), this protein is 4-hydroxythreonine-4-phosphate dehydrogenase.